We begin with the raw amino-acid sequence, 1008 residues long: Probable transport protein MmpL10 (1008 aa).

Helical transmembrane passes span 23–43 (WPWV…MTVP), 202–222 (IELV…RNPI), 225–245 (LLPL…VSGV), 257–277 (MIVL…VFLI), 301–321 (ALIS…ITFL), 340–360 (IGIA…LVLA), 389–409 (VAYL…ASLV), 835–855 (DLQL…MALL), 862–882 (IYLV…CVLV), 895–915 (VPGL…MLLA), 940–960 (VITA…LSSI), and 961–981 (ATVV…TFIV).

The protein belongs to the resistance-nodulation-cell division (RND) (TC 2.A.6) family. MmpL subfamily.

It localises to the cell membrane. This chain is Probable transport protein MmpL10 (mmpL10), found in Mycobacterium leprae (strain TN).